The following is a 601-amino-acid chain: Potassium-transporting ATPase potassium-binding subunit (601 aa).

The next 12 helical transmembrane spans lie at 6–26, 65–85, 136–156, 179–199, 283–303, 313–333, 367–387, 397–417, 419–439, 458–478, 524–544, and 566–586; these read IMLL…LGLF, SYAI…YAVQ, ALTG…FALI, LYIL…QGVI, FSNF…CFTF, GWAV…IVMT, FGIS…CGAV, MGGF…GGVG, GLYG…LMIG, SIAI…AVLV, MLAI…LAIA, and LFVA…YVPA.

Belongs to the KdpA family. As to quaternary structure, the system is composed of three essential subunits: KdpA, KdpB and KdpC.

The protein localises to the cell inner membrane. Functionally, part of the high-affinity ATP-driven potassium transport (or Kdp) system, which catalyzes the hydrolysis of ATP coupled with the electrogenic transport of potassium into the cytoplasm. This subunit binds the periplasmic potassium ions and delivers the ions to the membrane domain of KdpB through an intramembrane tunnel. This Herminiimonas arsenicoxydans protein is Potassium-transporting ATPase potassium-binding subunit.